A 637-amino-acid chain; its full sequence is DNA mismatch repair protein MutL (637 aa).

Polar residues predominate over residues 343 to 352 (QQSPDRQVSP). The disordered stretch occupies residues 343-411 (QQSPDRQVSP…SARNGDVSLP (69 aa)). Residues 365 to 380 (SIERKPSVSYDVRDSH) show a composition bias toward basic and acidic residues. Residues 388–397 (YSSGSSSYRS) are compositionally biased toward low complexity.

It belongs to the DNA mismatch repair MutL/HexB family.

In terms of biological role, this protein is involved in the repair of mismatches in DNA. It is required for dam-dependent methyl-directed DNA mismatch repair. May act as a 'molecular matchmaker', a protein that promotes the formation of a stable complex between two or more DNA-binding proteins in an ATP-dependent manner without itself being part of a final effector complex. This is DNA mismatch repair protein MutL from Shewanella halifaxensis (strain HAW-EB4).